Here is a 182-residue protein sequence, read N- to C-terminus: uncharacterized protein (182 aa).

This is an uncharacterized protein from Mycobacterium tuberculosis (strain CDC 1551 / Oshkosh).